Reading from the N-terminus, the 164-residue chain is Kunitz-type serine protease inhibitor BbKI (164 aa).

Belongs to the protease inhibitor I3 (leguminous Kunitz-type inhibitor) family. As to quaternary structure, monomer.

It is found in the secreted. Inhibits bovine trypsin, human plasma kallikrein and plasmin and weakly bovine chymotrypsin. In Bauhinia bauhinioides (Perlebia bauhinoides), this protein is Kunitz-type serine protease inhibitor BbKI.